A 304-amino-acid polypeptide reads, in one-letter code: Acetyl-coenzyme A carboxylase carboxyl transferase subunit beta (304 aa).

Positions 23-292 (VWTKCDSCGQ…PNPEAPREGV (270 aa)) constitute a CoA carboxyltransferase N-terminal domain. Zn(2+)-binding residues include Cys27, Cys30, Cys46, and Cys49. A C4-type zinc finger spans residues 27–49 (CDSCGQVLYRAELERNLEVCPKC). The interval 285-304 (PEAPREGVVVPPVPDQEPEA) is disordered. Pro residues predominate over residues 295–304 (PPVPDQEPEA).

This sequence belongs to the AccD/PCCB family. As to quaternary structure, acetyl-CoA carboxylase is a heterohexamer composed of biotin carboxyl carrier protein (AccB), biotin carboxylase (AccC) and two subunits each of ACCase subunit alpha (AccA) and ACCase subunit beta (AccD). It depends on Zn(2+) as a cofactor.

Its subcellular location is the cytoplasm. The enzyme catalyses N(6)-carboxybiotinyl-L-lysyl-[protein] + acetyl-CoA = N(6)-biotinyl-L-lysyl-[protein] + malonyl-CoA. It participates in lipid metabolism; malonyl-CoA biosynthesis; malonyl-CoA from acetyl-CoA: step 1/1. In terms of biological role, component of the acetyl coenzyme A carboxylase (ACC) complex. Biotin carboxylase (BC) catalyzes the carboxylation of biotin on its carrier protein (BCCP) and then the CO(2) group is transferred by the transcarboxylase to acetyl-CoA to form malonyl-CoA. This is Acetyl-coenzyme A carboxylase carboxyl transferase subunit beta from Shigella sonnei (strain Ss046).